Consider the following 227-residue polypeptide: Cytidylate kinase (227 aa).

12–20 (GPSGAGKGT) provides a ligand contact to ATP.

It belongs to the cytidylate kinase family. Type 1 subfamily.

The protein resides in the cytoplasm. The enzyme catalyses CMP + ATP = CDP + ADP. The catalysed reaction is dCMP + ATP = dCDP + ADP. This is Cytidylate kinase from Shigella boydii serotype 4 (strain Sb227).